Here is a 371-residue protein sequence, read N- to C-terminus: uncharacterized protein (371 aa).

An ABC transporter domain is found at 20 to 250 (VTIRNVTKRY…PANIFVAGFI (231 aa)). ATP is bound at residue 52-59 (GPSGCGKS).

Belongs to the ABC transporter superfamily.

The protein localises to the cell inner membrane. In terms of biological role, probably part of a binding-protein-dependent transport system y4oPQRS. This system probably transports a sugar-like molecule. Probably responsible for energy coupling to the transport system. This is an uncharacterized protein from Sinorhizobium fredii (strain NBRC 101917 / NGR234).